The following is an 833-amino-acid chain: P protein (833 aa).

The Cytoplasmic portion of the chain corresponds to 1–172 (MRLENKDIRL…QVSKLGCCVR (172 aa)). The helical transmembrane segment at 173–193 (WIKITGLFVFVVLCSILFSLY) threads the bilayer. Residues 194-325 (PDQGKFWQLL…QFLGASVEAQ (132 aa)) are Extracellular-facing. N-linked (GlcNAc...) asparagine glycans are attached at residues N210, N214, and N269. A helical membrane pass occupies residues 326 to 346 (VASAVAILAGVYTLIIFEIVH). Residues 347-348 (RT) are Cytoplasmic-facing. Residues 349–369 (LAAMLGALAALAALAVVGDRP) form a helical membrane-spanning segment. Residues 370–381 (SLTHVVEWIDFE) lie on the Extracellular side of the membrane. Residues 382-402 (TLALLFGMMILVAVFSETGFF) form a helical membrane-spanning segment. Topologically, residues 403–417 (DYCAVKAYQLSRGRV) are cytoplasmic. A helical membrane pass occupies residues 418–438 (WAMIFMLCLMAAILSAFLDNV). Over 439–501 (TTMLLFTPVT…ELRKMGLDFA (63 aa)) the chain is Extracellular. Residues 502-522 (GFTAHMFLGICLVLLVSFPLL) form a helical membrane-spanning segment. Residues 523–617 (RLLYWNKKLY…RKHRISDRSL (95 aa)) are Cytoplasmic-facing. The helical transmembrane segment at 618–638 (LVKCLTVLGFVISMFFLNSFV) threads the bilayer. Position 639 (P639) is a topological domain, extracellular. The chain crosses the membrane as a helical span at residues 640–660 (GIHLDLGWIAILGAIWLLILA). At 661-675 (DIHDFEIILHRVEWA) the chain is on the cytoplasmic side. Residues 676–696 (TLLFFAALFVLMEALTHLHLV) traverse the membrane as a helical segment. Over 697 to 718 (EYVGEQTALLIKMVPEDQRFAA) the chain is Extracellular. A helical transmembrane segment spans residues 719–739 (AIVLIVWVSALASSLIDNIPF). Topologically, residues 740–759 (TATMIPVLLNLSQDPEISLP) are cytoplasmic. A helical membrane pass occupies residues 760 to 780 (ALPLMYALALGACLGGNGTLI). Over 781 to 810 (GASTNVVCAGIAEKHGYGFSFMEFFRLGFP) the chain is Extracellular. Residues 811–831 (VMLMSCTIGMCYLLIAHIVVG) form a helical membrane-spanning segment. Residues 832–833 (WN) are Cytoplasmic-facing.

It belongs to the CitM (TC 2.A.11) transporter family. In terms of tissue distribution, most abundant in melanocytes. Also present in neonatal and adult eye tissue presumably as a result of expression in the retinal pigmented epithelium and choroid body, known sites of melanogenesis in the eye. Small but detectable amounts also observed in fetal, neonatal and adult brain. Moderate amounts detected in adult testis and ovary. Not detected in heart, kidney, spleen, liver or thymus.

The protein localises to the melanosome membrane. It catalyses the reaction chloride(in) = chloride(out). Functionally, contributes to a melanosome-specific anion (chloride) current that modulates melanosomal pH for optimal tyrosinase activity required for melanogenesis and the melanosome maturation. One of the components of the mammalian pigmentary system. May serve as a key control point at which color variation is determined. Major determinant of eye color. Seems to regulate the post-translational processing of tyrosinase, which catalyzes the limiting reaction in melanin synthesis. This Mus musculus (Mouse) protein is P protein (Oca2).